The following is a 56-amino-acid chain: Large ribosomal subunit protein uL30 (56 aa).

The protein belongs to the universal ribosomal protein uL30 family. Part of the 50S ribosomal subunit.

In Nitratidesulfovibrio vulgaris (strain ATCC 29579 / DSM 644 / CCUG 34227 / NCIMB 8303 / VKM B-1760 / Hildenborough) (Desulfovibrio vulgaris), this protein is Large ribosomal subunit protein uL30.